The sequence spans 393 residues: Cobalt-precorrin-5B C(1)-methyltransferase (393 aa).

The tract at residues 1–35 (MSDETRVGEAAEQAATPEKIRKGSARRERGNRTGF) is disordered. Positions 18–31 (EKIRKGSARRERGN) are enriched in basic and acidic residues.

Belongs to the CbiD family.

It catalyses the reaction Co-precorrin-5B + S-adenosyl-L-methionine = Co-precorrin-6A + S-adenosyl-L-homocysteine. It functions in the pathway cofactor biosynthesis; adenosylcobalamin biosynthesis; cob(II)yrinate a,c-diamide from sirohydrochlorin (anaerobic route): step 6/10. In terms of biological role, catalyzes the methylation of C-1 in cobalt-precorrin-5B to form cobalt-precorrin-6A. The polypeptide is Cobalt-precorrin-5B C(1)-methyltransferase (Dechloromonas aromatica (strain RCB)).